The sequence spans 145 residues: Flagellar assembly factor FliW (145 aa).

It belongs to the FliW family. In terms of assembly, interacts with translational regulator CsrA and flagellin(s).

The protein resides in the cytoplasm. Acts as an anti-CsrA protein, binds CsrA and prevents it from repressing translation of its target genes, one of which is flagellin. Binds to flagellin and participates in the assembly of the flagellum. The chain is Flagellar assembly factor FliW from Clostridium kluyveri (strain NBRC 12016).